A 116-amino-acid chain; its full sequence is Large ribosomal subunit protein uL22c (116 aa).

The protein belongs to the universal ribosomal protein uL22 family. In terms of assembly, part of the 50S ribosomal subunit.

The protein localises to the plastid. It is found in the chloroplast. This protein binds specifically to 23S rRNA. In terms of biological role, the globular domain of the protein is located near the polypeptide exit tunnel on the outside of the subunit, while an extended beta-hairpin is found that lines the wall of the exit tunnel in the center of the 70S ribosome. This Euglena gracilis protein is Large ribosomal subunit protein uL22c (rpl22).